A 163-amino-acid polypeptide reads, in one-letter code: Sperm acrosome membrane-associated protein 3 (163 aa).

The first 35 residues, 1 to 35 (MEAGSWAPRRWPRPPGIVLLALASVLSSLLSSGQA), serve as a signal peptide directing secretion. One can recognise a C-type lysozyme domain in the interval 36 to 163 (RVYSRCELAR…LSDWVDGCEL (128 aa)). Cystine bridges form between C41-C161, C65-C149, C99-C114, and C110-C128.

This sequence belongs to the glycosyl hydrolase 22 family. As to quaternary structure, interacts with ASTL.

It is found in the secreted. Its function is as follows. Sperm surface membrane protein that may be involved in sperm-egg plasma membrane adhesion and fusion during fertilization. It could be a potential receptor for the egg oligosaccharide residue N-acetylglucosamine, which is present in the extracellular matrix over the egg plasma membrane. The processed form has no detectable bacteriolytic activity in vitro. The chain is Sperm acrosome membrane-associated protein 3 (SPACA3) from Bos taurus (Bovine).